The following is a 214-amino-acid chain: MQDYKIEFIKFALSRNVLRFGEFKLKSGRVSPYFFNAGLFNTGADLARLGEFYAAAIQANRLAYDVIFGPAYKGIPIGTTVSVALFNRFGLDKPVCFNRKEAKDHGEGGNLIGSPLQGNVLLVDDVITAGTAIREAMDIIAANGATLSAVVIALNRKERGKGELSAVQEVERDYQCRVLSIIELDDLLAFLETDSEYSRYLPSMKAYREQFGVA.

Lys26 contacts 5-phospho-alpha-D-ribose 1-diphosphate. 34 to 35 (FF) is a binding site for orotate. Residues 72 to 73 (YK), Arg99, Lys100, Lys103, His105, and 124 to 132 (DDVITAGTA) each bind 5-phospho-alpha-D-ribose 1-diphosphate. 2 residues coordinate orotate: Thr128 and Arg156.

Belongs to the purine/pyrimidine phosphoribosyltransferase family. PyrE subfamily. Homodimer. It depends on Mg(2+) as a cofactor.

It carries out the reaction orotidine 5'-phosphate + diphosphate = orotate + 5-phospho-alpha-D-ribose 1-diphosphate. The protein operates within pyrimidine metabolism; UMP biosynthesis via de novo pathway; UMP from orotate: step 1/2. Catalyzes the transfer of a ribosyl phosphate group from 5-phosphoribose 1-diphosphate to orotate, leading to the formation of orotidine monophosphate (OMP). This Actinobacillus succinogenes (strain ATCC 55618 / DSM 22257 / CCUG 43843 / 130Z) protein is Orotate phosphoribosyltransferase.